Consider the following 96-residue polypeptide: Integration host factor subunit beta (96 aa).

The interval 59-86 (RVGRNPKTGETVELDGKHVPHFKPGKEL) is disordered. Residues 72–86 (LDGKHVPHFKPGKEL) show a composition bias toward basic and acidic residues.

It belongs to the bacterial histone-like protein family. Heterodimer of an alpha and a beta chain.

This protein is one of the two subunits of integration host factor, a specific DNA-binding protein that functions in genetic recombination as well as in transcriptional and translational control. The chain is Integration host factor subunit beta from Pseudoalteromonas atlantica (strain T6c / ATCC BAA-1087).